The following is an 806-amino-acid chain: Transitional endoplasmic reticulum ATPase (806 aa).

S3 is modified (phosphoserine). Residues 247–253 (PGTGKTL), N348, H384, and 521–526 (GCGKTL) contribute to the ATP site. Disordered stretches follow at residues 708–727 (RRER…EDDP) and 768–806 (FGSF…DLYG). Positions 768–778 (FGSFRFPSSNQ) are enriched in low complexity. The span at 779 to 794 (GGSGPSQGSSGGGGGN) shows a compositional bias: gly residues.

Belongs to the AAA ATPase family. As to quaternary structure, homohexamer.

The protein localises to the cytoplasm. It localises to the cytosol. It is found in the endoplasmic reticulum. Its subcellular location is the nucleus. The catalysed reaction is ATP + H2O = ADP + phosphate + H(+). Functionally, necessary for the fragmentation of Golgi stacks during mitosis and for their reassembly after mitosis. Involved in the formation of the nuclear envelope, and of the transitional endoplasmic reticulum (tER). The transfer of membranes from the endoplasmic reticulum to the Golgi apparatus occurs via 50-70 nm transition vesicles which derive from part-rough, part-smooth transitional elements of the endoplasmic reticulum (tER). Vesicle budding from the tER is an ATP-dependent process. Also involved in DNA damage response: recruited to double-strand breaks (DSBs) sites and promotes the recruitment of tp53bp1 at DNA damage sites. Together with sprtn metalloprotease, involved in the repair of covalent DNA-protein cross-links (DPCs) during DNA synthesis. Involved in interstrand cross-link repair in response to replication stress by mediating unloading of the ubiquitinated CMG helicase complex. Enhances cell cycle progression and inhibits apoptosis at low temperatures. Essential for the maturation of ubiquitin-containing autophagosomes and the clearance of ubiquitinated protein by autophagy. Acts as a negative regulator of type I interferon production by promoting ubiquitination of RIGI. May play a role in the ubiquitin-dependent sorting of membrane proteins to lysosomes where they undergo degradation. May more particularly play a role in caveolins sorting in cells. By controlling the steady-state expression of the IGF1R receptor, indirectly regulates the insulin-like growth factor receptor signaling pathway. This is Transitional endoplasmic reticulum ATPase from Danio rerio (Zebrafish).